Reading from the N-terminus, the 442-residue chain is Protein trichome birefringence-like 26 (442 aa).

The chain crosses the membrane as a helical; Signal-anchor for type II membrane protein span at residues 51 to 71; it reads FFLYFSLVALAYYFIISSLAV. Residues 164 to 166 carry the GDS motif motif; the sequence is GDS. Positions 409–423 match the DCXHWCLPGXXDXWN motif motif; that stretch reads DCLHWCLPGPIDSWN.

It belongs to the PC-esterase family. TBL subfamily.

Its subcellular location is the membrane. May be involved in the O-acetylation of mannan. May act as a bridging protein that binds pectin and other cell wall polysaccharides. Probably involved in maintaining esterification of pectins. This chain is Protein trichome birefringence-like 26 (TBL26), found in Arabidopsis thaliana (Mouse-ear cress).